The sequence spans 1395 residues: DNA polymerase II large subunit (1395 aa).

2 disordered regions span residues 279–320 (IGKD…PRVE) and 657–704 (GNRM…MSDT). The span at 283–312 (EADEGDSAEDANGDDAGEGADDDGGDEADE) shows a compositional bias: acidic residues. 2 stretches are compositionally biased toward basic and acidic residues: residues 661 to 671 (GRPEKSERRDL) and 690 to 700 (DVAKATKHADD).

It belongs to the archaeal DNA polymerase II family. In terms of assembly, heterodimer of a large subunit and a small subunit. Post-translationally, this protein undergoes a protein self splicing that involves a post-translational excision of the intervening region (intein) followed by peptide ligation.

It catalyses the reaction DNA(n) + a 2'-deoxyribonucleoside 5'-triphosphate = DNA(n+1) + diphosphate. The catalysed reaction is Exonucleolytic cleavage in the 3'- to 5'-direction to yield nucleoside 5'-phosphates.. Possesses two activities: a DNA synthesis (polymerase) and an exonucleolytic activity that degrades single-stranded DNA in the 3'- to 5'-direction. Has a template-primer preference which is characteristic of a replicative DNA polymerase. In Haloarcula marismortui (strain ATCC 43049 / DSM 3752 / JCM 8966 / VKM B-1809) (Halobacterium marismortui), this protein is DNA polymerase II large subunit.